A 204-amino-acid chain; its full sequence is Small ribosomal subunit protein eS8 (204 aa).

This sequence belongs to the eukaryotic ribosomal protein eS8 family.

This Griffithsia japonica (Red alga) protein is Small ribosomal subunit protein eS8 (RPS8).